We begin with the raw amino-acid sequence, 183 residues long: Acyl-homoserine-lactone synthase (183 aa).

Belongs to the autoinducer synthase family.

It catalyses the reaction a fatty acyl-[ACP] + S-adenosyl-L-methionine = an N-acyl-L-homoserine lactone + S-methyl-5'-thioadenosine + holo-[ACP] + H(+). Functionally, involved in the synthesis of the acyl-homoserine lactone (AHL) signal N-(3-hydroxydodecanoyl)-L-HSL (3-hydroxy-C(12)-HSL or OH-dDHL). Probably part of a quorum-sensing system with AnoR. The chain is Acyl-homoserine-lactone synthase from Acinetobacter nosocomialis.